The sequence spans 513 residues: Histidine ammonia-lyase (513 aa).

The segment at residues 144–146 (ASG) is a cross-link (5-imidazolinone (Ala-Gly)). Ser145 carries the post-translational modification 2,3-didehydroalanine (Ser).

The protein belongs to the PAL/histidase family. In terms of processing, contains an active site 4-methylidene-imidazol-5-one (MIO), which is formed autocatalytically by cyclization and dehydration of residues Ala-Ser-Gly.

The protein localises to the cytoplasm. The catalysed reaction is L-histidine = trans-urocanate + NH4(+). The protein operates within amino-acid degradation; L-histidine degradation into L-glutamate; N-formimidoyl-L-glutamate from L-histidine: step 1/3. This Streptococcus pyogenes serotype M5 (strain Manfredo) protein is Histidine ammonia-lyase.